The primary structure comprises 164 residues: Cyclic pyranopterin monophosphate synthase (164 aa).

Substrate is bound by residues 77–79 and 115–116; these read LCH and ME. Asp-130 is an active-site residue.

Belongs to the MoaC family. As to quaternary structure, homohexamer; trimer of dimers.

The enzyme catalyses (8S)-3',8-cyclo-7,8-dihydroguanosine 5'-triphosphate = cyclic pyranopterin phosphate + diphosphate. It functions in the pathway cofactor biosynthesis; molybdopterin biosynthesis. In terms of biological role, catalyzes the conversion of (8S)-3',8-cyclo-7,8-dihydroguanosine 5'-triphosphate to cyclic pyranopterin monophosphate (cPMP). The sequence is that of Cyclic pyranopterin monophosphate synthase from Rhizobium meliloti (strain 1021) (Ensifer meliloti).